Consider the following 116-residue polypeptide: Large ribosomal subunit protein uL18 (116 aa).

This sequence belongs to the universal ribosomal protein uL18 family. Part of the 50S ribosomal subunit; part of the 5S rRNA/L5/L18/L25 subcomplex. Contacts the 5S and 23S rRNAs.

This is one of the proteins that bind and probably mediate the attachment of the 5S RNA into the large ribosomal subunit, where it forms part of the central protuberance. The sequence is that of Large ribosomal subunit protein uL18 from Pseudomonas fluorescens (strain ATCC BAA-477 / NRRL B-23932 / Pf-5).